A 76-amino-acid polypeptide reads, in one-letter code: Putative membrane protein insertion efficiency factor (76 aa).

This sequence belongs to the UPF0161 family.

The protein localises to the cell inner membrane. Could be involved in insertion of integral membrane proteins into the membrane. This chain is Putative membrane protein insertion efficiency factor, found in Anaeromyxobacter dehalogenans (strain 2CP-C).